The chain runs to 195 residues: Imidazoleglycerol-phosphate dehydratase (195 aa).

It belongs to the imidazoleglycerol-phosphate dehydratase family.

Its subcellular location is the cytoplasm. The catalysed reaction is D-erythro-1-(imidazol-4-yl)glycerol 3-phosphate = 3-(imidazol-4-yl)-2-oxopropyl phosphate + H2O. The protein operates within amino-acid biosynthesis; L-histidine biosynthesis; L-histidine from 5-phospho-alpha-D-ribose 1-diphosphate: step 6/9. The polypeptide is Imidazoleglycerol-phosphate dehydratase (Frankia casuarinae (strain DSM 45818 / CECT 9043 / HFP020203 / CcI3)).